The following is a 687-amino-acid chain: Light-independent protochlorophyllide reductase subunit B (687 aa).

Asp36 is a [4Fe-4S] cluster binding site. Residue Asp441 is the Proton donor of the active site. 576-577 contacts substrate; sequence GM.

The protein belongs to the ChlB/BchB/BchZ family. As to quaternary structure, protochlorophyllide reductase is composed of three subunits; ChlL, ChlN and ChlB. Forms a heterotetramer of two ChlB and two ChlN subunits. It depends on [4Fe-4S] cluster as a cofactor.

It localises to the plastid. The protein resides in the chloroplast. The catalysed reaction is chlorophyllide a + oxidized 2[4Fe-4S]-[ferredoxin] + 2 ADP + 2 phosphate = protochlorophyllide a + reduced 2[4Fe-4S]-[ferredoxin] + 2 ATP + 2 H2O. Its pathway is porphyrin-containing compound metabolism; chlorophyll biosynthesis (light-independent). Component of the dark-operative protochlorophyllide reductase (DPOR) that uses Mg-ATP and reduced ferredoxin to reduce ring D of protochlorophyllide (Pchlide) to form chlorophyllide a (Chlide). This reaction is light-independent. The NB-protein (ChlN-ChlB) is the catalytic component of the complex. This Chlamydomonas reinhardtii (Chlamydomonas smithii) protein is Light-independent protochlorophyllide reductase subunit B.